The sequence spans 146 residues: MSGAGMVDITAKEPVRREAVASGFISLKRETVKAIREGRVEKGDVISVASVAAVLAVKETPRLIPLTHPIPIEKVEPEVRVRDDGVEVRVRVATTAKTGVEMEALAGVTAALLTVWDMVKSLEKDETGNYPDTVITGVKVEVKRKG.

Substrate contacts are provided by residues 66 to 68 (LTH) and 102 to 103 (ME). Residue Asp117 is part of the active site.

It belongs to the MoaC family. Homohexamer; trimer of dimers.

The catalysed reaction is (8S)-3',8-cyclo-7,8-dihydroguanosine 5'-triphosphate = cyclic pyranopterin phosphate + diphosphate. Its pathway is cofactor biosynthesis; molybdopterin biosynthesis. Catalyzes the conversion of (8S)-3',8-cyclo-7,8-dihydroguanosine 5'-triphosphate to cyclic pyranopterin monophosphate (cPMP). The sequence is that of Probable cyclic pyranopterin monophosphate synthase from Aeropyrum pernix (strain ATCC 700893 / DSM 11879 / JCM 9820 / NBRC 100138 / K1).